Consider the following 692-residue polypeptide: Elongation factor G (692 aa).

A tr-type G domain is found at 8–282 (KDTRNIGIMA…AVLDYLPSPL (275 aa)). GTP contacts are provided by residues 17–24 (AHIDAGKT), 81–85 (DTPGH), and 135–138 (NKMD).

It belongs to the TRAFAC class translation factor GTPase superfamily. Classic translation factor GTPase family. EF-G/EF-2 subfamily.

It localises to the cytoplasm. Functionally, catalyzes the GTP-dependent ribosomal translocation step during translation elongation. During this step, the ribosome changes from the pre-translocational (PRE) to the post-translocational (POST) state as the newly formed A-site-bound peptidyl-tRNA and P-site-bound deacylated tRNA move to the P and E sites, respectively. Catalyzes the coordinated movement of the two tRNA molecules, the mRNA and conformational changes in the ribosome. This Shouchella clausii (strain KSM-K16) (Alkalihalobacillus clausii) protein is Elongation factor G.